Reading from the N-terminus, the 203-residue chain is Large ribosomal subunit protein bL25 (203 aa).

Belongs to the bacterial ribosomal protein bL25 family. CTC subfamily. In terms of assembly, part of the 50S ribosomal subunit; part of the 5S rRNA/L5/L18/L25 subcomplex. Contacts the 5S rRNA. Binds to the 5S rRNA independently of L5 and L18.

In terms of biological role, this is one of the proteins that binds to the 5S RNA in the ribosome where it forms part of the central protuberance. In Dechloromonas aromatica (strain RCB), this protein is Large ribosomal subunit protein bL25.